A 295-amino-acid polypeptide reads, in one-letter code: MIVVASPAVVREIMRRHGISPRKSLGQNFLIDLNIIDKIIKAADLTPADLVVEIGPGLGALTARAAARAGKVLAVEVDRGLLPALAEVLEGAGNVEIIRGDALDVDFDRLAGEKTDGAFGRGGKKYKLLANLPYYLTGPLLLRLLLERFNFALMVVMVQLEVAFRLTASPGTADYGALSVAVQYFTEPKVLFRVPRTVFYPPPGVDSAVVRLALRPAPAVTVRNEDVFFQVVRAAFGFRRKTLLNSLAASGLGPGREAWLEVLKRAGIDPQRRGETLSLSEFASIADSFLDAGGQ.

N28, L30, G55, E76, D101, and N131 together coordinate S-adenosyl-L-methionine.

The protein belongs to the class I-like SAM-binding methyltransferase superfamily. rRNA adenine N(6)-methyltransferase family. RsmA subfamily.

Its subcellular location is the cytoplasm. The enzyme catalyses adenosine(1518)/adenosine(1519) in 16S rRNA + 4 S-adenosyl-L-methionine = N(6)-dimethyladenosine(1518)/N(6)-dimethyladenosine(1519) in 16S rRNA + 4 S-adenosyl-L-homocysteine + 4 H(+). Functionally, specifically dimethylates two adjacent adenosines (A1518 and A1519) in the loop of a conserved hairpin near the 3'-end of 16S rRNA in the 30S particle. May play a critical role in biogenesis of 30S subunits. In Pelotomaculum thermopropionicum (strain DSM 13744 / JCM 10971 / SI), this protein is Ribosomal RNA small subunit methyltransferase A.